A 215-amino-acid chain; its full sequence is Adenylate kinase (215 aa).

10–15 serves as a coordination point for ATP; sequence GAGKGT. The NMP stretch occupies residues 30–59; sequence STGDIFRKNIKEKTELGQKVEGLLAQGKLV. AMP contacts are provided by residues T31, R36, 57–59, 85–88, and Q92; these read KLV and GFPR. Positions 126–163 are LID; the sequence is GRRVCPSCGASYHIDNNPTKVDGICDACQTPVIQREDD. An ATP-binding site is contributed by R127. Zn(2+) contacts are provided by C130 and C133. 136–137 is an ATP binding site; it reads SY. The Zn(2+) site is built by C150 and C153. Residues R160 and R171 each contribute to the AMP site. Residue L199 participates in ATP binding.

The protein belongs to the adenylate kinase family. As to quaternary structure, monomer.

The protein resides in the cytoplasm. It carries out the reaction AMP + ATP = 2 ADP. It functions in the pathway purine metabolism; AMP biosynthesis via salvage pathway; AMP from ADP: step 1/1. Catalyzes the reversible transfer of the terminal phosphate group between ATP and AMP. Plays an important role in cellular energy homeostasis and in adenine nucleotide metabolism. This chain is Adenylate kinase, found in Finegoldia magna (strain ATCC 29328 / DSM 20472 / WAL 2508) (Peptostreptococcus magnus).